Consider the following 106-residue polypeptide: Large ribosomal subunit protein uL24 (106 aa).

This sequence belongs to the universal ribosomal protein uL24 family. Part of the 50S ribosomal subunit.

Functionally, one of two assembly initiator proteins, it binds directly to the 5'-end of the 23S rRNA, where it nucleates assembly of the 50S subunit. In terms of biological role, one of the proteins that surrounds the polypeptide exit tunnel on the outside of the subunit. The chain is Large ribosomal subunit protein uL24 from Blochmanniella pennsylvanica (strain BPEN).